A 320-amino-acid chain; its full sequence is Cytochrome f (320 aa).

The signal sequence occupies residues 1 to 35; sequence MENRNTFSWVKEQMTRSISVSIMIYVITRTSISNA. Positions 36, 56, 59, and 60 each coordinate heme. Residues 286 to 306 form a helical membrane-spanning segment; sequence VQGLLFFFASVILAQVFLVLK.

Belongs to the cytochrome f family. The 4 large subunits of the cytochrome b6-f complex are cytochrome b6, subunit IV (17 kDa polypeptide, petD), cytochrome f and the Rieske protein, while the 4 small subunits are PetG, PetL, PetM and PetN. The complex functions as a dimer. Requires heme as cofactor.

It is found in the plastid. It localises to the chloroplast thylakoid membrane. Component of the cytochrome b6-f complex, which mediates electron transfer between photosystem II (PSII) and photosystem I (PSI), cyclic electron flow around PSI, and state transitions. This is Cytochrome f from Oryza nivara (Indian wild rice).